The following is a 430-amino-acid chain: Enolase (430 aa).

A (2R)-2-phosphoglycerate-binding site is contributed by Gln-167. Glu-209 functions as the Proton donor in the catalytic mechanism. The Mg(2+) site is built by Asp-246, Glu-289, and Asp-316. Positions 341, 370, 371, and 392 each coordinate (2R)-2-phosphoglycerate. Lys-341 (proton acceptor) is an active-site residue.

Belongs to the enolase family. Component of the RNA degradosome, a multiprotein complex involved in RNA processing and mRNA degradation. The cofactor is Mg(2+).

It is found in the cytoplasm. Its subcellular location is the secreted. It localises to the cell surface. The enzyme catalyses (2R)-2-phosphoglycerate = phosphoenolpyruvate + H2O. The protein operates within carbohydrate degradation; glycolysis; pyruvate from D-glyceraldehyde 3-phosphate: step 4/5. Its function is as follows. Catalyzes the reversible conversion of 2-phosphoglycerate (2-PG) into phosphoenolpyruvate (PEP). It is essential for the degradation of carbohydrates via glycolysis. The chain is Enolase from Alcanivorax borkumensis (strain ATCC 700651 / DSM 11573 / NCIMB 13689 / SK2).